The chain runs to 384 residues: Transcription factor iacI (384 aa).

It is found in the nucleus. Transcription factor; part of the gene cluster that mediates the biosynthesis of iso-A82775C, a enylepoxycyclohexane and biosynthetic precursor of the chloropestolide anticancer natural products. In Pestalotiopsis fici (strain W106-1 / CGMCC3.15140), this protein is Transcription factor iacI.